Reading from the N-terminus, the 269-residue chain is uncharacterized protein (269 aa).

This is an uncharacterized protein from Schizosaccharomyces pombe (strain 972 / ATCC 24843) (Fission yeast).